The chain runs to 563 residues: Delta-1-pyrroline-5-carboxylate dehydrogenase, mitochondrial (563 aa).

The transit peptide at 1-23 (MLPPALLRRSLLSYAWRGSGLRW) directs the protein to the mitochondrion. The residue at position 30 (lysine 30) is an N6-succinyllysine. Phosphoserine is present on serine 43. An N6-acetyllysine modification is found at lysine 51. An N6-acetyllysine; alternate mark is found at lysine 92, lysine 98, lysine 113, lysine 129, and lysine 174. N6-succinyllysine; alternate is present on residues lysine 92, lysine 98, lysine 113, lysine 129, and lysine 174. Residues serine 207, lysine 232, and 285-289 (GSVPT) contribute to the NAD(+) site. Residue glutamate 313 is the Proton acceptor of the active site. N6-acetyllysine is present on lysine 317. Position 346 is an N6-succinyllysine (lysine 346). Cysteine 347 serves as the catalytic Nucleophile. N6-acetyllysine occurs at positions 364 and 375. Lysine 394 carries the N6-succinyllysine modification. Residue glutamate 446 coordinates NAD(+). An N6-acetyllysine modification is found at lysine 461. Residue lysine 508 is modified to N6-acetyllysine; alternate. Lysine 508 carries the N6-succinyllysine; alternate modification. Serine 512 contacts substrate.

Belongs to the aldehyde dehydrogenase family. As to quaternary structure, homodimer.

It is found in the mitochondrion matrix. It carries out the reaction L-glutamate 5-semialdehyde + NAD(+) + H2O = L-glutamate + NADH + 2 H(+). The protein operates within amino-acid degradation; L-proline degradation into L-glutamate; L-glutamate from L-proline: step 2/2. Irreversible conversion of delta-1-pyrroline-5-carboxylate (P5C), derived either from proline or ornithine, to glutamate. This is a necessary step in the pathway interconnecting the urea and tricarboxylic acid cycles. The preferred substrate is glutamic gamma-semialdehyde, other substrates include succinic, glutaric and adipic semialdehydes. The protein is Delta-1-pyrroline-5-carboxylate dehydrogenase, mitochondrial (Aldh4a1) of Rattus norvegicus (Rat).